We begin with the raw amino-acid sequence, 555 residues long: MLKKIDPAQTESWKRLGRHYDGVKDLAMDDLFQQDPDRFKRLSMAFKDMVVDVSKNRITDKTLALLMDLARETGVKEAIAMMFRGDRINETEGRSVLHVALRNLADTPVLVDGKDVMPGVRGVLEQMRLFSTRVYSGQQTGYSNRTITDIVNIGIGGSDLGPKMVATALAPYARKGLNVHFVSNVDGTHIVETLKGLDPATTLFIIASKTFTTQETMTNAASARQWFLEGAGDPGHVAQHFVAISTNAAAVEAFGIDRDNMFGFWDWVGGRYSLWSAIGLSVACYIGFDNFKRLLKGGFDMDCHFRDTPLEQNIPVVLAMISIWYVNFFNFPTEAVLPYDQGLEYFPAYLQQACMESNGKSTDRNGNLVAHATSPIVWGEPGTNGQHAFYQLLHQGTQIVPCDFLVPAISHNPLGDHHALLVANCFAQAEALMKGRGEQEVTREMTAKGMDGEKLGRLLPHRVFHGNRPSNTIVFKQLTPEVLGAIIAMYEHKIFVQGVVWNIFSFDQWGVELGKALASQIFPELADHETVVTHDGSTNGLINVFKQMRSKTCRS.

Glutamate 356 (proton donor) is an active-site residue. Residues histidine 387 and lysine 515 contribute to the active site.

It belongs to the GPI family.

Its subcellular location is the cytoplasm. The catalysed reaction is alpha-D-glucose 6-phosphate = beta-D-fructose 6-phosphate. The protein operates within carbohydrate biosynthesis; gluconeogenesis. Its pathway is carbohydrate degradation; glycolysis; D-glyceraldehyde 3-phosphate and glycerone phosphate from D-glucose: step 2/4. Catalyzes the reversible isomerization of glucose-6-phosphate to fructose-6-phosphate. This is Glucose-6-phosphate isomerase from Desulforapulum autotrophicum (strain ATCC 43914 / DSM 3382 / VKM B-1955 / HRM2) (Desulfobacterium autotrophicum).